Consider the following 196-residue polypeptide: Chaperone protein TorD (196 aa).

This sequence belongs to the TorD/DmsD family. TorD subfamily.

The protein resides in the cytoplasm. In terms of biological role, involved in the biogenesis of TorA. Acts on TorA before the insertion of the molybdenum cofactor and, as a result, probably favors a conformation of the apoenzyme that is competent for acquiring the cofactor. The polypeptide is Chaperone protein TorD (Pasteurella multocida (strain Pm70)).